We begin with the raw amino-acid sequence, 473 residues long: Major myo-inositol transporter IolT (473 aa).

A run of 12 helical transmembrane segments spans residues 14-34 (IILV…VLNG), 49-69 (AFTE…GAVF), 83-103 (ILFL…APNV), 111-131 (FVLG…LAEM), 146-166 (LMIV…GTTM), 172-192 (VWRF…FGMI), 256-276 (IVFI…NSIM), 295-315 (IGNI…IWLL), 325-345 (MTGL…SLVL), 350-370 (ALPY…QGAI), 389-409 (LGMG…SFTF), and 411-431 (ILLA…LGIC).

This sequence belongs to the major facilitator superfamily. Sugar transporter (TC 2.A.1.1) family.

It is found in the cell membrane. The protein operates within polyol metabolism; myo-inositol degradation into acetyl-CoA. Major myo-inositol uptake transporter. This chain is Major myo-inositol transporter IolT (iolT), found in Bacillus subtilis (strain 168).